A 208-amino-acid chain; its full sequence is 3-demethoxyubiquinol 3-hydroxylase (208 aa).

Residues glutamate 57, glutamate 87, histidine 90, glutamate 139, glutamate 171, and histidine 174 each contribute to the Fe cation site.

Belongs to the COQ7 family. It depends on Fe cation as a cofactor.

The protein localises to the cell membrane. It carries out the reaction a 5-methoxy-2-methyl-3-(all-trans-polyprenyl)benzene-1,4-diol + AH2 + O2 = a 3-demethylubiquinol + A + H2O. The protein operates within cofactor biosynthesis; ubiquinone biosynthesis. Its function is as follows. Catalyzes the hydroxylation of 2-nonaprenyl-3-methyl-6-methoxy-1,4-benzoquinol during ubiquinone biosynthesis. The sequence is that of 3-demethoxyubiquinol 3-hydroxylase from Nitrosomonas europaea (strain ATCC 19718 / CIP 103999 / KCTC 2705 / NBRC 14298).